Reading from the N-terminus, the 1528-residue chain is Cell surface antigen I/II (1528 aa).

The signal sequence occupies residues 1–50 (MLQKCKLEGIIICNEKRLLGAAKVKSGRTLSGALLGTAILASGAGQKALA). Residues 50 to 156 (AEETSTTSTS…PEIKDDYSKQ (107 aa)) are disordered. The segment covering 51–68 (EETSTTSTSGGDTAVVGT) has biased composition (low complexity). Composition is skewed to polar residues over residues 83–97 (NPSS…QARQ) and 124–133 (TVSQDATVNK). The span at 142-154 (ANQKEPEIKDDYS) shows a compositional bias: basic and acidic residues. Ag I/II A repeat units follow at residues 161–235 (QKAT…QQAN), 236–315 (SDSQ…QAGN), 316–396 (AANE…QSGN), and 397–478 (AANE…KKDL). Disordered stretches follow at residues 840–951 (VPKV…VEPV) and 1459–1480 (SNTV…PKTT). A compositionally biased stretch (basic and acidic residues) spans 855–879 (TKPDEPTYEVEKELVDLPVEPKYEP). Residues 1459 to 1468 (SNTVRTSTPE) show a composition bias toward polar residues. Residues 1503–1507 (LPATG) carry the LPXTG sorting signal motif. Threonine 1506 bears the Pentaglycyl murein peptidoglycan amidated threonine mark. A propeptide spans 1507-1528 (GDSSNAYLPLLGLVSLTAGFSC) (removed by sortase).

It belongs to the antigen I/II family.

The protein localises to the secreted. It is found in the cell wall. The sequence is that of Cell surface antigen I/II from Streptococcus downei (Streptococcus sobrinus).